Consider the following 472-residue polypeptide: Siroheme synthase (472 aa).

Residues 1–204 (MDYLPIFTKL…GQTEKAIALM (204 aa)) form a precorrin-2 dehydrogenase /sirohydrochlorin ferrochelatase region. NAD(+) is bound by residues 22 to 23 (SI) and 43 to 44 (LE). Position 128 is a phosphoserine (S128). Residues 215–472 (GDVALVGAGP…SRDPFLVNLA (258 aa)) are uroporphyrinogen-III C-methyltransferase. P224 is a binding site for S-adenosyl-L-methionine. D247 serves as the catalytic Proton acceptor. K269 functions as the Proton donor in the catalytic mechanism. S-adenosyl-L-methionine is bound by residues 300-302 (GGD), I305, 330-331 (TA), M382, and G411.

In the N-terminal section; belongs to the precorrin-2 dehydrogenase / sirohydrochlorin ferrochelatase family. The protein in the C-terminal section; belongs to the precorrin methyltransferase family.

The catalysed reaction is uroporphyrinogen III + 2 S-adenosyl-L-methionine = precorrin-2 + 2 S-adenosyl-L-homocysteine + H(+). The enzyme catalyses precorrin-2 + NAD(+) = sirohydrochlorin + NADH + 2 H(+). It carries out the reaction siroheme + 2 H(+) = sirohydrochlorin + Fe(2+). The protein operates within cofactor biosynthesis; adenosylcobalamin biosynthesis; precorrin-2 from uroporphyrinogen III: step 1/1. It functions in the pathway cofactor biosynthesis; adenosylcobalamin biosynthesis; sirohydrochlorin from precorrin-2: step 1/1. Its pathway is porphyrin-containing compound metabolism; siroheme biosynthesis; precorrin-2 from uroporphyrinogen III: step 1/1. It participates in porphyrin-containing compound metabolism; siroheme biosynthesis; siroheme from sirohydrochlorin: step 1/1. The protein operates within porphyrin-containing compound metabolism; siroheme biosynthesis; sirohydrochlorin from precorrin-2: step 1/1. Multifunctional enzyme that catalyzes the SAM-dependent methylations of uroporphyrinogen III at position C-2 and C-7 to form precorrin-2 via precorrin-1. Then it catalyzes the NAD-dependent ring dehydrogenation of precorrin-2 to yield sirohydrochlorin. Finally, it catalyzes the ferrochelation of sirohydrochlorin to yield siroheme. This is Siroheme synthase from Psychromonas ingrahamii (strain DSM 17664 / CCUG 51855 / 37).